Consider the following 2531-residue polypeptide: Serine/threonine-protein kinase ATR (2531 aa).

One can recognise an FAT domain in the interval 1490-2067; that stretch reads LIVKVAETFG…MWQSAYLLRQ (578 aa). The region spanning 2192–2512 is the PI3K/PI4K catalytic domain; it reads FSDKVKVLHS…VSQLASSLIE (321 aa). A G-loop region spans residues 2198–2204; sequence VLHSNTK. The tract at residues 2368–2376 is catalytic loop; that stretch reads GLGDRHTKN. Positions 2387 to 2411 are activation loop; the sequence is HVDFDMIFNKGETLGTPELVPFRLT. The FATC domain maps to 2499–2531; the sequence is HPMQVSQLASSLIELATSEEKLSEMYLGWMATL.

Belongs to the PI3/PI4-kinase family. ATM subfamily. The cofactor is Mn(2+).

It localises to the nucleus. It catalyses the reaction L-seryl-[protein] + ATP = O-phospho-L-seryl-[protein] + ADP + H(+). The enzyme catalyses L-threonyl-[protein] + ATP = O-phospho-L-threonyl-[protein] + ADP + H(+). Serine/threonine protein kinase which activates checkpoint signaling upon genotoxic stresses such as ionizing radiation (IR), ultraviolet light (UV), or DNA replication stalling, thereby acting as a DNA damage sensor. Recognizes the substrate consensus sequence [ST]-Q. Phosphorylates various proteins, which collectively inhibits DNA replication and mitosis and promotes DNA repair and recombination. Prevents mitotic catastrophe by functioning in the S-phase checkpoint and cooperating with atm-1 in the checkpoint response to double-strand breaks (DSBs) after ionizing radiation (IR) to induce cell cycle arrest or apoptosis via the cep-1/p53 pathway. In response to ionizing radiation, probably required for the association between the brc-1-brd-1 heterodimer and rad-51 and let-70 in order to activate E3-ubiquitin ligase activity of the heterodimer and induce ubiquitination at DNA damage sites. The polypeptide is Serine/threonine-protein kinase ATR (Caenorhabditis elegans).